A 96-amino-acid chain; its full sequence is ESAT-6-like protein EsxH (96 aa).

Zn(2+) contacts are provided by histidine 14, histidine 70, histidine 76, and glutamate 77.

This sequence belongs to the WXG100 family. ESAT-6 subfamily. Forms a tight 1:1 complex with EsxG. When it is complexed to EsxG, interacts directly with host HGS/HRS.

It is found in the secreted. Its function is as follows. EsxH, in complex with EsxG, disrupts ESCRT function and impairs host phagosome maturation, thereby promoting intracellular bacterial growth. The complex acts by interacting, via EsxH, with the host hepatocyte growth factor-regulated tyrosine kinase substrate (HGS/HRS), a component of the ESCRT machinery. The polypeptide is ESAT-6-like protein EsxH (Mycobacterium tuberculosis (strain ATCC 25618 / H37Rv)).